The sequence spans 657 residues: Protein kinase and PP2C-like domain-containing protein (657 aa).

The Protein kinase domain occupies 32–327 (FSLLSPIAKG…LKIIEKHIAV (296 aa)). Residues 38–46 (IAKGSESTV) and K59 contribute to the ATP site. D156 (proton acceptor; for kinase activity) is an active-site residue. The PPM-type phosphatase domain maps to 390 to 647 (SWGSFATCGR…DNITVIVVFL (258 aa)). Residues D426, G427, D598, and D638 each coordinate Mn(2+).

The protein in the N-terminal section; belongs to the protein kinase superfamily. Ser/Thr protein kinase family. It in the C-terminal section; belongs to the PP2C family. The cofactor is Mg(2+). Mn(2+) is required as a cofactor.

The enzyme catalyses L-seryl-[protein] + ATP = O-phospho-L-seryl-[protein] + ADP + H(+). It catalyses the reaction L-threonyl-[protein] + ATP = O-phospho-L-threonyl-[protein] + ADP + H(+). The catalysed reaction is O-phospho-L-seryl-[protein] + H2O = L-seryl-[protein] + phosphate. It carries out the reaction O-phospho-L-threonyl-[protein] + H2O = L-threonyl-[protein] + phosphate. The protein is Protein kinase and PP2C-like domain-containing protein of Oryza sativa subsp. japonica (Rice).